Here is a 34-residue protein sequence, read N- to C-terminus: Photosystem II reaction center protein Psb30 (34 aa).

The chain crosses the membrane as a helical span at residues 5-25 (VLFQLTALIFVVAAGPLVIVL).

It belongs to the Psb30/Ycf12 family. In terms of assembly, PSII is composed of 1 copy each of membrane proteins PsbA, PsbB, PsbC, PsbD, PsbE, PsbF, PsbH, PsbI, PsbJ, PsbK, PsbL, PsbM, PsbT, PsbX, PsbY, PsbZ, Psb30/Ycf12, peripheral proteins of the oxygen-evolving complex and a large number of cofactors. It forms dimeric complexes.

Its subcellular location is the plastid. The protein resides in the chloroplast thylakoid membrane. Its function is as follows. A core subunit of photosystem II (PSII), probably helps stabilize the reaction center. The protein is Photosystem II reaction center protein Psb30 of Tupiella akineta (Green alga).